The chain runs to 211 residues: Probable transcription repressor protein RGM1 (211 aa).

Positions 6 to 11 (PKRNKD) match the Nuclear localization signal motif. C2H2-type zinc fingers lie at residues 19–44 (YRCV…IRKH) and 50–73 (FQCN…SSVH). The interval 178-211 (NIVELPPDSSDTPASPSKVQSFDQAKDASPNAKK) is disordered. Low complexity predominate over residues 183-194 (PPDSSDTPASPS).

It localises to the nucleus. The chain is Probable transcription repressor protein RGM1 (RGM1) from Saccharomyces cerevisiae (strain ATCC 204508 / S288c) (Baker's yeast).